The primary structure comprises 359 residues: Ribosomal RNA large subunit methyltransferase M (359 aa).

Residues S186, 219 to 222 (CPGG), D238, D258, and D275 each bind S-adenosyl-L-methionine. The Proton acceptor role is filled by K304.

This sequence belongs to the class I-like SAM-binding methyltransferase superfamily. RNA methyltransferase RlmE family. RlmM subfamily. As to quaternary structure, monomer.

Its subcellular location is the cytoplasm. The catalysed reaction is cytidine(2498) in 23S rRNA + S-adenosyl-L-methionine = 2'-O-methylcytidine(2498) in 23S rRNA + S-adenosyl-L-homocysteine + H(+). Catalyzes the 2'-O-methylation at nucleotide C2498 in 23S rRNA. The sequence is that of Ribosomal RNA large subunit methyltransferase M from Vibrio parahaemolyticus serotype O3:K6 (strain RIMD 2210633).